We begin with the raw amino-acid sequence, 429 residues long: Serum response factor-binding protein 1 (429 aa).

Ala2 bears the N-acetylalanine mark. Coiled-coil stretches lie at residues 42–67 and 108–144; these read KGTE…AMKE and LLKK…EDNH. 2 stretches are compositionally biased toward polar residues: residues 128-138 and 146-160; these read QNVTEVESSKN and KNTL…NLQR. Disordered regions lie at residues 128–285 and 311–429; these read QNVT…GDDF and EKVF…TFDD. Basic and acidic residues predominate over residues 183 to 195; the sequence is NSKEKIAKMEHGP. Lys190 is covalently cross-linked (Glycyl lysine isopeptide (Lys-Gly) (interchain with G-Cter in SUMO2)). Phosphoserine is present on residues Ser203, Ser205, Ser264, Ser279, and Ser281. Over residues 249 to 265 the composition is skewed to acidic residues; it reads GGEELCEEEKEYFDDST. The segment covering 311–341 has biased composition (basic and acidic residues); it reads EKVFLKEDTGETHGDTRNDKTKPSTETRKLE. A Glycyl lysine isopeptide (Lys-Gly) (interchain with G-Cter in SUMO2) cross-link involves residue Lys316. 3 positions are modified to phosphoserine: Ser349, Ser351, and Ser367. Positions 357–367 are enriched in basic and acidic residues; the sequence is NFKEQAPKTRS. Residues 373 to 383 show a composition bias toward polar residues; sequence NEPQFKNQFNK.

As to quaternary structure, interacts with SRF. Forms complexes with SRF and SRF cofactors ARID2, MYOCD and NKX2-5. Interacts with the N-terminus of SLC2A4.

Its subcellular location is the cytoplasm. The protein resides in the perinuclear region. Its function is as follows. May be involved in regulating transcriptional activation of cardiac genes during the aging process. May play a role in biosynthesis and/or processing of SLC2A4 in adipose cells. In Pongo abelii (Sumatran orangutan), this protein is Serum response factor-binding protein 1.